The following is a 953-amino-acid chain: Homeobox protein LUMINIDEPENDENS (953 aa).

The segment at residues 63-123 (KIGKRPRDLL…VTQKTRVRKQ (61 aa)) is a DNA-binding region (homeobox). The disordered stretch occupies residues 404 to 430 (EQPGQKAAGKSPQTVRIGTSGRSRPMS). Over residues 414–425 (SPQTVRIGTSGR) the composition is skewed to polar residues. A run of 5 repeats spans residues 498–502 (QPVNG), 507–511 (QPVNG), 516–520 (QPVNG), 525–529 (QPVNG), and 534–538 (QPVNG). A 5 X 5 AA repeats of Q-P-V-N-G region spans residues 498-538 (QPVNGFSTIQPVNGPSAVQPVNGPLAVQPVNGPSALQPVNG). Disordered regions lie at residues 606–668 (NSKE…EPQD), 733–763 (APNS…NPGM), and 861–953 (VGQM…KRWR). Positions 608–623 (KEADVQRNRNRRERET) are enriched in basic and acidic residues. A compositionally biased stretch (low complexity) spans 651–661 (PEIPSQQPPEE). The span at 733–742 (APNSSSSSNK) shows a compositional bias: polar residues. A compositionally biased stretch (low complexity) spans 869-884 (SSSWRSQQSQNSYYSH). Composition is skewed to polar residues over residues 888–934 (EIAS…QQQA) and 942–953 (THPYWNQNKRWR).

Interacts with SUF4. Expressed in shoot apex, root apex, leaf primordia and floral buds.

The protein localises to the nucleus. Its function is as follows. Seems to play a role in the regulation of flowering time in the autonomous flowering pathway by repressing FLOWERING LOCUS C expression. This is Homeobox protein LUMINIDEPENDENS (LD) from Arabidopsis thaliana (Mouse-ear cress).